We begin with the raw amino-acid sequence, 688 residues long: DNA ligase (688 aa).

Residues 42–46 (DAEYD), 91–92 (SL), and Glu-128 each bind NAD(+). Lys-130 serves as the catalytic N6-AMP-lysine intermediate. NAD(+) contacts are provided by Arg-151, Glu-188, Lys-305, and Lys-329. Residues Cys-423, Cys-426, Cys-441, and Cys-447 each coordinate Zn(2+). A BRCT domain is found at 608–688 (APQGVLAGKT…GMRKLLEGQL (81 aa)).

This sequence belongs to the NAD-dependent DNA ligase family. LigA subfamily. The cofactor is Mg(2+). Mn(2+) serves as cofactor.

The catalysed reaction is NAD(+) + (deoxyribonucleotide)n-3'-hydroxyl + 5'-phospho-(deoxyribonucleotide)m = (deoxyribonucleotide)n+m + AMP + beta-nicotinamide D-nucleotide.. In terms of biological role, DNA ligase that catalyzes the formation of phosphodiester linkages between 5'-phosphoryl and 3'-hydroxyl groups in double-stranded DNA using NAD as a coenzyme and as the energy source for the reaction. It is essential for DNA replication and repair of damaged DNA. The chain is DNA ligase from Paraburkholderia xenovorans (strain LB400).